We begin with the raw amino-acid sequence, 58 residues long: UPF0391 membrane protein MADE_1011595 (58 aa).

2 helical membrane-spanning segments follow: residues 4 to 24 (WAIT…GGIA) and 27 to 47 (ATGI…ISLI).

The protein belongs to the UPF0391 family.

It localises to the cell membrane. The protein is UPF0391 membrane protein MADE_1011595 of Alteromonas mediterranea (strain DSM 17117 / CIP 110805 / LMG 28347 / Deep ecotype).